Here is a 314-residue protein sequence, read N- to C-terminus: MAFQEDGNHTAVTEFVLFGLTDDPVLRVILFIIFLCIYLVTVSGNLSTILLIRVSSQLHHPMYFFLSHLAFADIGYSSSVTPNMLVNFLVERHTISYIGCAIQLGSVVFFGSSECFILAAMAYDRFMAICNPLLYSTKMSTQVCVQLLLIAYIGGFLNTWSFTICFYSLVFCGPNGVNHFFCDFAPLIELSCSDVSVPATVPSFTAGSIIVVTVIVIAISYIYILITILKMHSTEGRQKAFSTCTSHLTAVTLFYGTITFIYVMPKSSFSTDQNKVVSVFYMVVIPMLNPLIYSLRNNEIKGALKRQIGRKIFS.

Residues 1–28 lie on the Extracellular side of the membrane; that stretch reads MAFQEDGNHTAVTEFVLFGLTDDPVLRV. Asn-8 is a glycosylation site (N-linked (GlcNAc...) asparagine). Residues 29-49 traverse the membrane as a helical segment; sequence ILFIIFLCIYLVTVSGNLSTI. At 50–57 the chain is on the cytoplasmic side; it reads LLIRVSSQ. Residues 58–78 form a helical membrane-spanning segment; that stretch reads LHHPMYFFLSHLAFADIGYSS. Topologically, residues 79–102 are extracellular; the sequence is SVTPNMLVNFLVERHTISYIGCAI. Cys-100 and Cys-192 are joined by a disulfide. A helical membrane pass occupies residues 103–123; that stretch reads QLGSVVFFGSSECFILAAMAY. Residues 124–136 lie on the Cytoplasmic side of the membrane; the sequence is DRFMAICNPLLYS. Residues 137 to 157 form a helical membrane-spanning segment; that stretch reads TKMSTQVCVQLLLIAYIGGFL. Topologically, residues 158–199 are extracellular; it reads NTWSFTICFYSLVFCGPNGVNHFFCDFAPLIELSCSDVSVPA. A helical membrane pass occupies residues 200-220; it reads TVPSFTAGSIIVVTVIVIAIS. Topologically, residues 221–240 are cytoplasmic; the sequence is YIYILITILKMHSTEGRQKA. Residues 241 to 261 traverse the membrane as a helical segment; sequence FSTCTSHLTAVTLFYGTITFI. At 262–274 the chain is on the extracellular side; the sequence is YVMPKSSFSTDQN. Residues 275–295 traverse the membrane as a helical segment; that stretch reads KVVSVFYMVVIPMLNPLIYSL. At 296 to 314 the chain is on the cytoplasmic side; it reads RNNEIKGALKRQIGRKIFS.

This sequence belongs to the G-protein coupled receptor 1 family.

The protein resides in the cell membrane. Potential odorant receptor. This chain is Olfactory receptor 5P6, found in Mus musculus (Mouse).